A 58-amino-acid chain; its full sequence is Photosystem II reaction center protein K (58 aa).

Positions 1–21 (MLNMISTFFDSSSNFSEAFLA) are excised as a propeptide. Residues 29–49 (IFDPIVDVMPIIPVFFLLLAF) traverse the membrane as a helical segment.

The protein belongs to the PsbK family. As to quaternary structure, PSII is composed of 1 copy each of membrane proteins PsbA, PsbB, PsbC, PsbD, PsbE, PsbF, PsbH, PsbI, PsbJ, PsbK, PsbL, PsbM, PsbT, PsbX, PsbY, PsbZ, Psb30/Ycf12, at least 3 peripheral proteins of the oxygen-evolving complex and a large number of cofactors. It forms dimeric complexes.

Its subcellular location is the plastid. It localises to the chloroplast thylakoid membrane. In terms of biological role, one of the components of the core complex of photosystem II (PSII). PSII is a light-driven water:plastoquinone oxidoreductase that uses light energy to abstract electrons from H(2)O, generating O(2) and a proton gradient subsequently used for ATP formation. It consists of a core antenna complex that captures photons, and an electron transfer chain that converts photonic excitation into a charge separation. This chain is Photosystem II reaction center protein K, found in Chaetosphaeridium globosum (Charophycean green alga).